The chain runs to 158 residues: Putative 4-hydroxy-4-methyl-2-oxoglutarate aldolase (158 aa).

Substrate-binding positions include 75-78 (GDLI) and arginine 97. Residue aspartate 98 participates in a divalent metal cation binding.

The protein belongs to the class II aldolase/RraA-like family. Homotrimer. It depends on a divalent metal cation as a cofactor.

The catalysed reaction is 4-hydroxy-4-methyl-2-oxoglutarate = 2 pyruvate. It catalyses the reaction oxaloacetate + H(+) = pyruvate + CO2. Its function is as follows. Catalyzes the aldol cleavage of 4-hydroxy-4-methyl-2-oxoglutarate (HMG) into 2 molecules of pyruvate. Also contains a secondary oxaloacetate (OAA) decarboxylase activity due to the common pyruvate enolate transition state formed following C-C bond cleavage in the retro-aldol and decarboxylation reactions. The sequence is that of Putative 4-hydroxy-4-methyl-2-oxoglutarate aldolase from Saccharopolyspora erythraea (strain ATCC 11635 / DSM 40517 / JCM 4748 / NBRC 13426 / NCIMB 8594 / NRRL 2338).